The sequence spans 68 residues: Protein transport protein Sec61 subunit gamma (68 aa).

The Cytoplasmic portion of the chain corresponds to 1 to 32 (MDQVMQFVEPSRQFVKDSIRLVKRCTKPDRKE). Residues 33-61 (FQKVAMATAIGFAIMGFIGFFVKLIHIPI) form a helical membrane-spanning segment. At 62–68 (NNIIVGG) the chain is on the extracellular side.

This sequence belongs to the SecE/SEC61-gamma family. In terms of assembly, the SEC61 channel-forming translocon complex consists of channel-forming core components SEC61A1, SEC61B and SEC61G and different auxiliary components such as SEC62 and SEC63. The SEC61 channel associates with the multi-pass translocon (MPT) complex.

The protein localises to the endoplasmic reticulum membrane. Functionally, component of SEC61 channel-forming translocon complex that mediates transport of signal peptide-containing precursor polypeptides across the endoplasmic reticulum (ER). Forms a ribosome receptor and a gated pore in the ER membrane, both functions required for cotranslational translocation of nascent polypeptides. The SEC61 channel is also involved in ER membrane insertion of transmembrane proteins: it mediates membrane insertion of the first few transmembrane segments of proteins, while insertion of subsequent transmembrane regions of multi-pass membrane proteins is mediated by the multi-pass translocon (MPT) complex. The protein is Protein transport protein Sec61 subunit gamma (sec61g) of Harpagifer antarcticus (Antarctic spiny plunderfish).